The sequence spans 336 residues: Ketol-acid reductoisomerase (NADP(+)) (336 aa).

Positions 1–181 (MKVYYDQDAD…GGGRSGIIET (181 aa)) constitute a KARI N-terminal Rossmann domain. Residues 24–27 (YGSQ), Arg-47, Ser-50, and Ser-52 each bind NADP(+). His-107 is an active-site residue. Position 133 (Gly-133) interacts with NADP(+). The 146-residue stretch at 182–327 (SFREETETDL…ERLRGMMPWI (146 aa)) folds into the KARI C-terminal knotted domain. Residues Asp-190, Glu-194, Glu-226, and Glu-230 each coordinate Mg(2+). Ser-251 contacts substrate.

This sequence belongs to the ketol-acid reductoisomerase family. Mg(2+) is required as a cofactor.

The catalysed reaction is (2R)-2,3-dihydroxy-3-methylbutanoate + NADP(+) = (2S)-2-acetolactate + NADPH + H(+). It carries out the reaction (2R,3R)-2,3-dihydroxy-3-methylpentanoate + NADP(+) = (S)-2-ethyl-2-hydroxy-3-oxobutanoate + NADPH + H(+). It participates in amino-acid biosynthesis; L-isoleucine biosynthesis; L-isoleucine from 2-oxobutanoate: step 2/4. The protein operates within amino-acid biosynthesis; L-valine biosynthesis; L-valine from pyruvate: step 2/4. Involved in the biosynthesis of branched-chain amino acids (BCAA). Catalyzes an alkyl-migration followed by a ketol-acid reduction of (S)-2-acetolactate (S2AL) to yield (R)-2,3-dihydroxy-isovalerate. In the isomerase reaction, S2AL is rearranged via a Mg-dependent methyl migration to produce 3-hydroxy-3-methyl-2-ketobutyrate (HMKB). In the reductase reaction, this 2-ketoacid undergoes a metal-dependent reduction by NADPH to yield (R)-2,3-dihydroxy-isovalerate. The protein is Ketol-acid reductoisomerase (NADP(+)) of Halorhodospira halophila (strain DSM 244 / SL1) (Ectothiorhodospira halophila (strain DSM 244 / SL1)).